Consider the following 680-residue polypeptide: Zinc finger protein 334 (680 aa).

The KRAB domain maps to Val10 to Asp81. 14 consecutive C2H2-type zinc fingers follow at residues Asn237–His259, Tyr265–His287, Tyr293–His315, Tyr321–His343, Tyr349–His371, Asn377–His399, Tyr405–His427, Tyr433–His455, Tyr461–His483, Tyr544–His566, Tyr572–His594, Tyr600–His622, Tyr628–His650, and Tyr656–His678.

It belongs to the krueppel C2H2-type zinc-finger protein family.

The protein resides in the nucleus. Its function is as follows. May be involved in transcriptional regulation. This chain is Zinc finger protein 334 (ZNF334), found in Homo sapiens (Human).